A 510-amino-acid polypeptide reads, in one-letter code: Maturase K (510 aa).

The protein belongs to the intron maturase 2 family. MatK subfamily.

It is found in the plastid. The protein localises to the chloroplast. In terms of biological role, usually encoded in the trnK tRNA gene intron. Probably assists in splicing its own and other chloroplast group II introns. The chain is Maturase K from Anomochloa marantoidea (Herbaceous bamboo).